The sequence spans 241 residues: Peptidoglycan endopeptidase RipB (241 aa).

The signal sequence occupies residues methionine 1–alanine 31. In terms of domain architecture, NlpC/P60 spans arginine 109–tyrosine 241. Cysteine 152 (nucleophile) is an active-site residue. Histidine 201 serves as the catalytic Proton acceptor. Glutamate 213 is an active-site residue.

This sequence belongs to the peptidase C40 family. In terms of assembly, monomer.

Functionally, peptidoglycan endopeptidase that cleaves the bond between D-glutamate and meso-diaminopimelate. Binds high-molecular weight peptidoglycan, but does not degrade it. Required for normal separation of daughter cells after cell division and cell wall integrity. Required for host cell invasion. This Mycobacterium tuberculosis (strain CDC 1551 / Oshkosh) protein is Peptidoglycan endopeptidase RipB (ripB).